Reading from the N-terminus, the 102-residue chain is Parathymosin (102 aa).

Positions 1 to 102 are disordered; the sequence is MSEKSVEAAA…RQKTENGASA (102 aa). S2 carries the post-translational modification N-acetylserine. S2 is subject to Phosphoserine. K4 carries the N6-acetyllysine modification. A phosphoserine mark is found at S5 and S13. Basic and acidic residues predominate over residues 13 to 37; the sequence is SAKDLKEKKEKVEEKASRKERKKEV. K15 carries the N6-acetyllysine modification. The span at 38 to 76 shows a compositional bias: acidic residues; it reads VEEEENGAEEEEEETAEDGEEEDEGEEEDEEEEEEDDEG. T52 bears the Phosphothreonine mark. At K92 the chain carries N6-acetyllysine.

Belongs to the pro/parathymosin family.

Its function is as follows. Parathymosin may mediate immune function by blocking the effect of prothymosin alpha which confers resistance to certain opportunistic infections. This chain is Parathymosin (PTMS), found in Homo sapiens (Human).